Reading from the N-terminus, the 43-residue chain is METATLVTISISCLLVSFTGYALYTAFGQPSKQLRDPFEDHED.

The chain crosses the membrane as a helical span at residues 5–27 (TLVTISISCLLVSFTGYALYTAF).

Belongs to the PsbN family.

It localises to the plastid. Its subcellular location is the chloroplast thylakoid membrane. Its function is as follows. May play a role in photosystem I and II biogenesis. The protein is Protein PsbN of Pinus koraiensis (Korean pine).